Here is a 94-residue protein sequence, read N- to C-terminus: Large ribosomal subunit protein bL27 (94 aa).

Residues 1–9 (MLKLNLQFF) constitute a propeptide that is removed on maturation. Positions 12 to 32 (KKGVSSTKNGRDSESKRLGAK) are disordered. Positions 20 to 32 (NGRDSESKRLGAK) are enriched in basic and acidic residues.

Belongs to the bacterial ribosomal protein bL27 family. In terms of processing, the N-terminus is cleaved by ribosomal processing cysteine protease Prp.

This Staphylococcus carnosus (strain TM300) protein is Large ribosomal subunit protein bL27.